A 194-amino-acid chain; its full sequence is Probable GTP-binding protein EngB (194 aa).

Positions 22–194 (DLPEYALAGR…AWQFIKEGME (173 aa)) constitute an EngB-type G domain. Residues 30-37 (GRSNVGKS), 57-61 (GKTQT), 75-78 (DVPG), 142-145 (TKAD), and 174-176 (FSS) contribute to the GTP site. The Mg(2+) site is built by S37 and T59.

It belongs to the TRAFAC class TrmE-Era-EngA-EngB-Septin-like GTPase superfamily. EngB GTPase family. Mg(2+) is required as a cofactor.

Its function is as follows. Necessary for normal cell division and for the maintenance of normal septation. In Listeria monocytogenes serotype 4b (strain CLIP80459), this protein is Probable GTP-binding protein EngB.